A 394-amino-acid chain; its full sequence is Dual-specificity RNA methyltransferase RlmN (394 aa).

The active-site Proton acceptor is the glutamate 92. Residues 98 to 341 (ENDRGTLCIS…TTVRRTRGDD (244 aa)) enclose the Radical SAM core domain. Cysteine 105 and cysteine 346 are joined by a disulfide. 3 residues coordinate [4Fe-4S] cluster: cysteine 112, cysteine 116, and cysteine 119. S-adenosyl-L-methionine is bound by residues 166–167 (GE), serine 198, 220–222 (SLH), and asparagine 303. The S-methylcysteine intermediate role is filled by cysteine 346. A disordered region spans residues 374–394 (DSAVQRRADAAPSGSATETTR).

Belongs to the radical SAM superfamily. RlmN family. The cofactor is [4Fe-4S] cluster.

The protein resides in the cytoplasm. The enzyme catalyses adenosine(2503) in 23S rRNA + 2 reduced [2Fe-2S]-[ferredoxin] + 2 S-adenosyl-L-methionine = 2-methyladenosine(2503) in 23S rRNA + 5'-deoxyadenosine + L-methionine + 2 oxidized [2Fe-2S]-[ferredoxin] + S-adenosyl-L-homocysteine. The catalysed reaction is adenosine(37) in tRNA + 2 reduced [2Fe-2S]-[ferredoxin] + 2 S-adenosyl-L-methionine = 2-methyladenosine(37) in tRNA + 5'-deoxyadenosine + L-methionine + 2 oxidized [2Fe-2S]-[ferredoxin] + S-adenosyl-L-homocysteine. Its function is as follows. Specifically methylates position 2 of adenine 2503 in 23S rRNA and position 2 of adenine 37 in tRNAs. m2A2503 modification seems to play a crucial role in the proofreading step occurring at the peptidyl transferase center and thus would serve to optimize ribosomal fidelity. The chain is Dual-specificity RNA methyltransferase RlmN from Methylibium petroleiphilum (strain ATCC BAA-1232 / LMG 22953 / PM1).